Here is a 114-residue protein sequence, read N- to C-terminus: Iron-sulfur cluster insertion protein ErpA (114 aa).

The iron-sulfur cluster site is built by C42, C106, and C108.

Belongs to the HesB/IscA family. As to quaternary structure, homodimer. The cofactor is iron-sulfur cluster.

Its function is as follows. Required for insertion of 4Fe-4S clusters for at least IspG. This is Iron-sulfur cluster insertion protein ErpA from Pseudoalteromonas atlantica (strain T6c / ATCC BAA-1087).